The chain runs to 120 residues: Small ribosomal subunit protein bS6 (120 aa).

Positions 97–112 (SNEPSPILKNQSTENT) are enriched in polar residues. Positions 97–120 (SNEPSPILKNQSTENTPVIDVTAN) are disordered.

It belongs to the bacterial ribosomal protein bS6 family.

Functionally, binds together with bS18 to 16S ribosomal RNA. The sequence is that of Small ribosomal subunit protein bS6 from Rickettsia bellii (strain RML369-C).